The sequence spans 357 residues: N-acetyl-gamma-glutamyl-phosphate reductase (357 aa).

The active site involves Cys-160.

Belongs to the NAGSA dehydrogenase family. Type 1 subfamily.

Its subcellular location is the cytoplasm. The enzyme catalyses N-acetyl-L-glutamate 5-semialdehyde + phosphate + NADP(+) = N-acetyl-L-glutamyl 5-phosphate + NADPH + H(+). It participates in amino-acid biosynthesis; L-arginine biosynthesis; N(2)-acetyl-L-ornithine from L-glutamate: step 3/4. Catalyzes the NADPH-dependent reduction of N-acetyl-5-glutamyl phosphate to yield N-acetyl-L-glutamate 5-semialdehyde. The sequence is that of N-acetyl-gamma-glutamyl-phosphate reductase from Prochlorococcus marinus (strain MIT 9313).